Here is a 511-residue protein sequence, read N- to C-terminus: Lysine--tRNA ligase (511 aa).

2 residues coordinate Mg(2+): Glu-422 and Glu-429.

The protein belongs to the class-II aminoacyl-tRNA synthetase family. Homodimer. The cofactor is Mg(2+).

The protein resides in the cytoplasm. It carries out the reaction tRNA(Lys) + L-lysine + ATP = L-lysyl-tRNA(Lys) + AMP + diphosphate. This Chlorobaculum tepidum (strain ATCC 49652 / DSM 12025 / NBRC 103806 / TLS) (Chlorobium tepidum) protein is Lysine--tRNA ligase.